A 272-amino-acid chain; its full sequence is Ribosomal RNA small subunit methyltransferase A (272 aa).

S-adenosyl-L-methionine is bound by residues asparagine 18, leucine 20, glycine 45, glutamate 66, aspartate 91, and asparagine 113.

This sequence belongs to the class I-like SAM-binding methyltransferase superfamily. rRNA adenine N(6)-methyltransferase family. RsmA subfamily.

The protein resides in the cytoplasm. It carries out the reaction adenosine(1518)/adenosine(1519) in 16S rRNA + 4 S-adenosyl-L-methionine = N(6)-dimethyladenosine(1518)/N(6)-dimethyladenosine(1519) in 16S rRNA + 4 S-adenosyl-L-homocysteine + 4 H(+). Its function is as follows. Specifically dimethylates two adjacent adenosines (A1518 and A1519) in the loop of a conserved hairpin near the 3'-end of 16S rRNA in the 30S particle. May play a critical role in biogenesis of 30S subunits. The sequence is that of Ribosomal RNA small subunit methyltransferase A from Yersinia pestis bv. Antiqua (strain Antiqua).